Reading from the N-terminus, the 281-residue chain is uncharacterized protein (281 aa).

4 consecutive transmembrane segments (helical) span residues 8–28, 97–117, 147–167, and 210–230; these read ALPV…FIWS, LAVA…RGYG, PARI…GLAV, and IASV…IVPA.

This sequence to S.pombe bem46 and yeast YNL320w.

It is found in the cell membrane. This is an uncharacterized protein from Mycobacterium tuberculosis (strain CDC 1551 / Oshkosh).